Here is a 39-residue protein sequence, read N- to C-terminus: Photosystem II reaction center protein J (39 aa).

A helical membrane pass occupies residues 7 to 27; the sequence is IPLWIVAVVAGMGVIAVVGIF.

Belongs to the PsbJ family. PSII is composed of 1 copy each of membrane proteins PsbA, PsbB, PsbC, PsbD, PsbE, PsbF, PsbH, PsbI, PsbJ, PsbK, PsbL, PsbM, PsbT, PsbX, PsbY, PsbZ, Psb30/Ycf12, peripheral proteins PsbO, CyanoQ (PsbQ), PsbU, PsbV and a large number of cofactors. It forms dimeric complexes.

Its subcellular location is the cellular thylakoid membrane. This protein is a component of the reaction center of photosystem II. Its function is as follows. One of the components of the core complex of photosystem II (PSII). PSII is a light-driven water:plastoquinone oxidoreductase that uses light energy to abstract electrons from H(2)O, generating O(2) and a proton gradient subsequently used for ATP formation. It consists of a core antenna complex that captures photons, and an electron transfer chain that converts photonic excitation into a charge separation. The polypeptide is Photosystem II reaction center protein J (Picosynechococcus sp. (strain ATCC 27264 / PCC 7002 / PR-6) (Agmenellum quadruplicatum)).